Consider the following 107-residue polypeptide: Ferredoxin 1 (107 aa).

4Fe-4S ferredoxin-type domains are found at residues 2-30 and 31-60; these read TFVVTDNCIKCKYTDCVEVCPVDCFYEGP and NFLVIHPDECIDCALCEPECPAQAIFSEDE. Residues Cys9 and Cys17 each contribute to the [3Fe-4S] cluster site. Residues Cys21, Cys40, Cys43, and Cys46 each contribute to the [4Fe-4S] cluster site. Cys50 contacts [3Fe-4S] cluster.

[4Fe-4S] cluster is required as a cofactor. [3Fe-4S] cluster serves as cofactor.

Its function is as follows. Ferredoxins are iron-sulfur proteins that transfer electrons in a wide variety of metabolic reactions. The sequence is that of Ferredoxin 1 from Stutzerimonas stutzeri (Pseudomonas stutzeri).